The sequence spans 168 residues: Photosystem I assembly protein Ycf3 (168 aa).

3 TPR repeats span residues 35 to 68 (AFAY…EMDP), 72 to 105 (SYIL…NPFL), and 120 to 153 (GEQA…TPGN).

The protein belongs to the Ycf3 family.

The protein resides in the plastid membrane. In terms of biological role, essential for the assembly of the photosystem I (PSI) complex. May act as a chaperone-like factor to guide the assembly of the PSI subunits. This chain is Photosystem I assembly protein Ycf3, found in Cuscuta gronovii (Common dodder).